Reading from the N-terminus, the 102-residue chain is Citrate lyase acyl carrier protein (102 aa).

Serine 14 is modified (O-(phosphoribosyl dephospho-coenzyme A)serine).

This sequence belongs to the CitD family. Oligomer with a subunit composition of (alpha,beta,gamma)6.

Its subcellular location is the cytoplasm. Functionally, covalent carrier of the coenzyme of citrate lyase. The protein is Citrate lyase acyl carrier protein of Streptococcus equi subsp. zooepidemicus (strain MGCS10565).